Consider the following 171-residue polypeptide: 6,7-dimethyl-8-ribityllumazine synthase (171 aa).

Residues phenylalanine 30, 64–66 (ALE), and 88–90 (AVI) contribute to the 5-amino-6-(D-ribitylamino)uracil site. 93–94 (ET) serves as a coordination point for (2S)-2-hydroxy-3-oxobutyl phosphate. Histidine 96 serves as the catalytic Proton donor. 5-amino-6-(D-ribitylamino)uracil is bound at residue asparagine 121. A (2S)-2-hydroxy-3-oxobutyl phosphate-binding site is contributed by arginine 135.

It belongs to the DMRL synthase family.

It catalyses the reaction (2S)-2-hydroxy-3-oxobutyl phosphate + 5-amino-6-(D-ribitylamino)uracil = 6,7-dimethyl-8-(1-D-ribityl)lumazine + phosphate + 2 H2O + H(+). The protein operates within cofactor biosynthesis; riboflavin biosynthesis; riboflavin from 2-hydroxy-3-oxobutyl phosphate and 5-amino-6-(D-ribitylamino)uracil: step 1/2. Catalyzes the formation of 6,7-dimethyl-8-ribityllumazine by condensation of 5-amino-6-(D-ribitylamino)uracil with 3,4-dihydroxy-2-butanone 4-phosphate. This is the penultimate step in the biosynthesis of riboflavin. In Polynucleobacter necessarius subsp. necessarius (strain STIR1), this protein is 6,7-dimethyl-8-ribityllumazine synthase.